A 71-amino-acid chain; its full sequence is MGASPVQLLIVLFIAVLVFGGKRLRTLGSDVGAAIKGFKEAMKEEPTEPEKLEQQPPVIEVVATQKEKTKG.

A helical membrane pass occupies residues 1-21 (MGASPVQLLIVLFIAVLVFGG).

This sequence belongs to the TatA/E family. In terms of assembly, the Tat system comprises two distinct complexes: a TatABC complex, containing multiple copies of TatA, TatB and TatC subunits, and a separate TatA complex, containing only TatA subunits. Substrates initially bind to the TatABC complex, which probably triggers association of the separate TatA complex to form the active translocon.

It is found in the cell inner membrane. Its function is as follows. Part of the twin-arginine translocation (Tat) system that transports large folded proteins containing a characteristic twin-arginine motif in their signal peptide across membranes. TatA could form the protein-conducting channel of the Tat system. This chain is Sec-independent protein translocase protein TatA, found in Dichelobacter nodosus (strain VCS1703A).